The sequence spans 164 residues: Large ribosomal subunit protein bL17 (164 aa).

The segment at 127–164 (RARTDSVPARKGAGKKDASRVSGTVPDGQSQKIGKKKE) is disordered.

The protein belongs to the bacterial ribosomal protein bL17 family. Part of the 50S ribosomal subunit. Contacts protein L32.

The protein is Large ribosomal subunit protein bL17 of Treponema pallidum (strain Nichols).